A 118-amino-acid polypeptide reads, in one-letter code: UPF0342 protein BPUM_0928 (118 aa).

It belongs to the UPF0342 family.

The sequence is that of UPF0342 protein BPUM_0928 from Bacillus pumilus (strain SAFR-032).